The sequence spans 358 residues: Peroxidase 12 (358 aa).

The first 31 residues, 1–31 (MTKAYSTRVLTFLILISLMAVTLNLFPTVEA), serve as a signal peptide directing secretion. 4 cysteine pairs are disulfide-bonded: cysteine 53-cysteine 134, cysteine 86-cysteine 91, cysteine 140-cysteine 335, and cysteine 220-cysteine 247. Catalysis depends on histidine 84, which acts as the Proton acceptor. Ca(2+)-binding residues include aspartate 85, valine 88, glycine 90, glutamate 92, and serine 94. Proline 183 is a binding site for substrate. N-linked (GlcNAc...) asparagine glycosylation is found at asparagine 188 and asparagine 202. Position 213 (histidine 213) interacts with heme b. Threonine 214 is a Ca(2+) binding site. Asparagine 251 carries N-linked (GlcNAc...) asparagine glycosylation. Aspartate 259, serine 262, and aspartate 267 together coordinate Ca(2+). Asparagine 334 carries an N-linked (GlcNAc...) asparagine glycan.

It belongs to the peroxidase family. Classical plant (class III) peroxidase subfamily. Requires heme b as cofactor. Ca(2+) is required as a cofactor. As to expression, expressed in roots and leaves.

The protein resides in the secreted. It is found in the vacuole. It carries out the reaction 2 a phenolic donor + H2O2 = 2 a phenolic radical donor + 2 H2O. Its function is as follows. Removal of H(2)O(2), oxidation of toxic reductants, biosynthesis and degradation of lignin, suberization, auxin catabolism, response to environmental stresses such as wounding, pathogen attack and oxidative stress. These functions might be dependent on each isozyme/isoform in each plant tissue. Functionally, exhibits a Ca(2+)-pectate binding affinity which could be interpreted in vivo as a specificity to interact with the pectic structure of the cell wall. The sequence is that of Peroxidase 12 (PER12) from Arabidopsis thaliana (Mouse-ear cress).